Consider the following 250-residue polypeptide: Hydroxyacylglutathione hydrolase (250 aa).

Zn(2+) is bound by residues His53, His55, Asp57, His58, His110, Asp127, and His165.

This sequence belongs to the metallo-beta-lactamase superfamily. Glyoxalase II family. As to quaternary structure, monomer. Zn(2+) is required as a cofactor.

The enzyme catalyses an S-(2-hydroxyacyl)glutathione + H2O = a 2-hydroxy carboxylate + glutathione + H(+). Its pathway is secondary metabolite metabolism; methylglyoxal degradation; (R)-lactate from methylglyoxal: step 2/2. Thiolesterase that catalyzes the hydrolysis of S-D-lactoyl-glutathione to form glutathione and D-lactic acid. The polypeptide is Hydroxyacylglutathione hydrolase (Photorhabdus laumondii subsp. laumondii (strain DSM 15139 / CIP 105565 / TT01) (Photorhabdus luminescens subsp. laumondii)).